We begin with the raw amino-acid sequence, 256 residues long: GTP cyclohydrolase FolE2 (256 aa).

Belongs to the GTP cyclohydrolase IV family.

It carries out the reaction GTP + H2O = 7,8-dihydroneopterin 3'-triphosphate + formate + H(+). It participates in cofactor biosynthesis; 7,8-dihydroneopterin triphosphate biosynthesis; 7,8-dihydroneopterin triphosphate from GTP: step 1/1. Converts GTP to 7,8-dihydroneopterin triphosphate. The sequence is that of GTP cyclohydrolase FolE2 from Maridesulfovibrio salexigens (strain ATCC 14822 / DSM 2638 / NCIMB 8403 / VKM B-1763) (Desulfovibrio salexigens).